Reading from the N-terminus, the 79-residue chain is Acyl carrier protein (79 aa).

Residues 2–77 (SDVLERVRKI…DAVKFIQERL (76 aa)) enclose the Carrier domain. Ser-37 carries the O-(pantetheine 4'-phosphoryl)serine modification.

It belongs to the acyl carrier protein (ACP) family. In terms of processing, 4'-phosphopantetheine is transferred from CoA to a specific serine of apo-ACP by AcpS. This modification is essential for activity because fatty acids are bound in thioester linkage to the sulfhydryl of the prosthetic group.

It is found in the cytoplasm. The protein operates within lipid metabolism; fatty acid biosynthesis. In terms of biological role, carrier of the growing fatty acid chain in fatty acid biosynthesis. This is Acyl carrier protein from Phenylobacterium zucineum (strain HLK1).